Here is a 404-residue protein sequence, read N- to C-terminus: uncharacterized protein (404 aa).

A run of 11 helical transmembrane segments spans residues 9-29 (IYLI…PYLS), 36-56 (GFGE…FIGL), 76-96 (LVVK…LLFC), 103-123 (IMFY…QLSI), 135-155 (FIQV…LEFY), 162-182 (KRIL…YLIY), 199-219 (AFFY…SFFI), 236-256 (LGLY…ILAI), 288-308 (IVPI…LFFL), 319-339 (IIVF…VNYL), and 366-386 (LIFT…LGIL).

This sequence belongs to the polysaccharide synthase family. HI_0867/HI_1700 subfamily.

It is found in the cell membrane. This is an uncharacterized protein from Haemophilus influenzae (strain ATCC 51907 / DSM 11121 / KW20 / Rd).